We begin with the raw amino-acid sequence, 539 residues long: Glucans biosynthesis protein D (539 aa).

The tat-type signal signal peptide spans 1-29; that stretch reads MNRRNLLKASMALAAYGSVSASGLFAARA.

Belongs to the OpgD/OpgG family. In terms of processing, predicted to be exported by the Tat system. The position of the signal peptide cleavage has not been experimentally proven.

It is found in the periplasm. It functions in the pathway glycan metabolism; osmoregulated periplasmic glucan (OPG) biosynthesis. Probably involved in the control of the structural glucose backbone of osmoregulated periplasmic glucans (OPGs). The protein is Glucans biosynthesis protein D of Pseudomonas syringae pv. syringae (strain B728a).